Reading from the N-terminus, the 377-residue chain is UDP-N,N'-diacetylbacillosamine 2-epimerase (hydrolyzing) (377 aa).

It belongs to the UDP-N-acetylglucosamine 2-epimerase family.

The catalysed reaction is UDP-N,N'-diacetylbacillosamine + H2O = 2,4-diacetamido-2,4,6-trideoxy-alpha-D-mannopyranose + UDP + H(+). Involved in biosynthesis of legionaminic acid (5,7-diamino-3,5,7,9-tetradeoxy-D-glycero-D-galacto-non-2-ulosonic acid)(Leg), a sialic acid-like derivative that is incorporated into virulence-associated cell surface glycoconjugates such as lipopolysaccharide (LPS) which could be a key determinant in the ability of L.pneumophila to inhibit the fusion of phagosomes with lysosomes. LPS contains a majority alpha2,4-linked homomer of legionaminic acid. Catalyzes the conversion of UDP-N,N'-diacetylbacillosamine (Bac2Ac4Ac) into 2,4-diacetamido-2,4,6-trideoxymannose and UDP. The protein is UDP-N,N'-diacetylbacillosamine 2-epimerase (hydrolyzing) of Legionella pneumophila subsp. pneumophila (strain Philadelphia 1 / ATCC 33152 / DSM 7513).